Reading from the N-terminus, the 303-residue chain is 1D-myo-inositol 2-acetamido-2-deoxy-alpha-D-glucopyranoside deacetylase (303 aa).

Residues His-13, Asp-16, and His-147 each contribute to the Zn(2+) site.

It belongs to the MshB deacetylase family. It depends on Zn(2+) as a cofactor.

The enzyme catalyses 1D-myo-inositol 2-acetamido-2-deoxy-alpha-D-glucopyranoside + H2O = 1D-myo-inositol 2-amino-2-deoxy-alpha-D-glucopyranoside + acetate. Catalyzes the deacetylation of 1D-myo-inositol 2-acetamido-2-deoxy-alpha-D-glucopyranoside (GlcNAc-Ins) in the mycothiol biosynthesis pathway. This chain is 1D-myo-inositol 2-acetamido-2-deoxy-alpha-D-glucopyranoside deacetylase, found in Mycobacterium tuberculosis (strain ATCC 25177 / H37Ra).